A 291-amino-acid chain; its full sequence is Nucleotide-binding protein Lm4b_02443 (291 aa).

Residue 13-20 participates in ATP binding; sequence GMSGAGKT. 63 to 66 is a GTP binding site; sequence DLRG.

The protein belongs to the RapZ-like family.

Displays ATPase and GTPase activities. In Listeria monocytogenes serotype 4b (strain CLIP80459), this protein is Nucleotide-binding protein Lm4b_02443.